Consider the following 264-residue polypeptide: Diphthine synthase (264 aa).

Residues Leu10, Asp87, Val90, 115–116 (SI), Leu166, Ala209, and His234 each bind S-adenosyl-L-methionine.

Belongs to the diphthine synthase family. As to quaternary structure, homodimer.

It carries out the reaction 2-[(3S)-amino-3-carboxypropyl]-L-histidyl-[translation elongation factor 2] + 3 S-adenosyl-L-methionine = diphthine-[translation elongation factor 2] + 3 S-adenosyl-L-homocysteine + 3 H(+). It functions in the pathway protein modification; peptidyl-diphthamide biosynthesis. S-adenosyl-L-methionine-dependent methyltransferase that catalyzes the trimethylation of the amino group of the modified target histidine residue in translation elongation factor 2 (EF-2), to form an intermediate called diphthine. The three successive methylation reactions represent the second step of diphthamide biosynthesis. The chain is Diphthine synthase from Thermococcus gammatolerans (strain DSM 15229 / JCM 11827 / EJ3).